Here is a 516-residue protein sequence, read N- to C-terminus: Flavonoid 3',5'-hydroxylase (516 aa).

Heme is bound at residue C453.

This sequence belongs to the cytochrome P450 family. It depends on heme as a cofactor.

It catalyses the reaction a 3',5'-unsubstituted flavanone + 2 reduced [NADPH--hemoprotein reductase] + 2 O2 = a 3',5'-dihydroxyflavanone + 2 oxidized [NADPH--hemoprotein reductase] + 2 H2O + 2 H(+). It participates in pigment biosynthesis; anthocyanin biosynthesis. Catalyzes the 3'5'-hydroxylation of naringenin and eriodictyol to form 5,7,3,'4',5'-pentahydroxyflavanone and 3',5'-hydroxylation of dihydrokaempferol and dihydroquercetin to form dihydromyricetin. The chain is Flavonoid 3',5'-hydroxylase (CYP75A4) from Gentiana triflora (Clustered gentian).